A 784-amino-acid polypeptide reads, in one-letter code: Kinesin-like protein Klp68D (784 aa).

The region spanning 19 to 344 (CVQVVVRCRP…LRYASRAKSI (326 aa)) is the Kinesin motor domain. 106-113 (GQTGTGKT) serves as a coordination point for ATP. Residues 351–385 (NEDPQDAKLKEYQEEIERLKRLIGPQQQQRSEKQV) adopt a coiled-coil conformation. Disordered regions lie at residues 371 to 449 (RLIG…ERER), 605 to 652 (KFSS…PSSL), and 742 to 784 (IKSS…LVNK). Positions 386–396 (TAKKQRVKKPK) are enriched in basic residues. Residues 416–428 (PVEDDSDPEGAES) show a composition bias toward acidic residues. Positions 426–582 (AESESDKENE…KRQLLIIDNF (157 aa)) form a coiled coil. Residues 429-449 (ESDKENEAEVAKSNEELERER) show a composition bias toward basic and acidic residues. Residues 622-634 (SSKRPVSHPQRRR) are compositionally biased toward basic residues. Residues 769–778 (KKPASAYPKA) show a composition bias toward low complexity.

This sequence belongs to the TRAFAC class myosin-kinesin ATPase superfamily. Kinesin family. Kinesin II subfamily. In terms of tissue distribution, expressed primarily in the central nervous system and in a subset of the peripheral nervous system during embryogenesis.

It localises to the cytoplasm. Its subcellular location is the cytoskeleton. Its function is as follows. Plus-end directed microtubule motor that may be used for anterograde axonal transport and could conceivably move cargos in fly neurons different than those moved by kinesin heavy chain or other plus-end directed motors. This chain is Kinesin-like protein Klp68D (Klp68D), found in Drosophila melanogaster (Fruit fly).